The primary structure comprises 816 residues: Phosphatidylinositol 4-kinase beta (816 aa).

Disordered regions lie at residues 1-30 (MGDT…GSLL), 99-120 (EEED…RRRR), and 248-318 (AHRK…SFSS). N-acetylglycine is present on Gly-2. An interaction with ACBD3 region spans residues 2 to 68 (GDTVVEPAPL…VKLLHGGVAV (67 aa)). Positions 52–242 (CQDVLEKVKL…GTKLRKLILS (191 aa)) constitute a PIK helical domain. Residue Ser-258 is modified to Phosphoserine. Thr-263 bears the Phosphothreonine mark. 5 positions are modified to phosphoserine: Ser-266, Ser-275, Ser-277, Ser-284, and Ser-294. Polar residues-rich tracts occupy residues 278 to 297 (DATA…SNPK) and 306 to 318 (SSST…SFSS). Ser-428 is modified (phosphoserine). The residue at position 438 (Thr-438) is a Phosphothreonine. Ser-511 carries the post-translational modification Phosphoserine. Residues Thr-517 and Thr-519 each carry the phosphothreonine modification. The region spanning 535–801 (EPWQEKVRRI…MVDGSMRSIT (267 aa)) is the PI3K/PI4K catalytic domain. Residues 541–547 (VRRIREG) form a G-loop region. The catalytic loop stretch occupies residues 668-676 (QVKDRHNGN). An activation loop region spans residues 687–711 (HIDFGFILSSSPRNLGFETSAFKLT).

It belongs to the PI3/PI4-kinase family. Type III PI4K subfamily. Interacts with ARF1 and ARF3 in the Golgi complex, but not with ARF4, ARF5 or ARF6. Interacts with NCS1/FREQ in a calcium-independent manner. Interacts with CALN1/CABP8 and CALN2/CABP7; in a calcium-dependent manner; this interaction competes with NCS1/FREQ binding. Interacts with ACBD3. Interacts with ARMH3, YWHAB, YWHAE, YWHAG, YWHAH, YWHAQ, YWHAZ and SFN. Interacts with GGA2 (via VHS domain); the interaction is important for PI4KB location at the Golgi apparatus membrane. Interacts with ATG9A. The cofactor is Mg(2+). Mn(2+) serves as cofactor.

It localises to the endomembrane system. The protein localises to the mitochondrion outer membrane. Its subcellular location is the rough endoplasmic reticulum membrane. It is found in the golgi apparatus. The protein resides in the golgi apparatus membrane. It carries out the reaction a 1,2-diacyl-sn-glycero-3-phospho-(1D-myo-inositol) + ATP = a 1,2-diacyl-sn-glycero-3-phospho-(1D-myo-inositol 4-phosphate) + ADP + H(+). Inhibited by wortmannin. Increased kinase activity upon interaction with NCS1/FREQ. Its function is as follows. Phosphorylates phosphatidylinositol (PI) in the first committed step in the production of the second messenger inositol-1,4,5,-trisphosphate (PIP). May regulate Golgi disintegration/reorganization during mitosis, possibly via its phosphorylation. Involved in Golgi-to-plasma membrane trafficking. This chain is Phosphatidylinositol 4-kinase beta (PI4KB), found in Callithrix jacchus (White-tufted-ear marmoset).